Here is a 663-residue protein sequence, read N- to C-terminus: UvrABC system protein B (663 aa).

Residues 31–271 enclose the Helicase ATP-binding domain; sequence DNIEGGEKAQ…EQSISKIQAE (241 aa). 44 to 51 lines the ATP pocket; the sequence is GATGTGKT. The Beta-hairpin motif lies at 97–120; sequence YYDYYQPEAYVPSSDTYIEKDSSV. A Helicase C-terminal domain is found at 435–601; sequence QMDDLLGEIN…TIKKDIRDLI (167 aa). The region spanning 627–662 is the UVR domain; it reads QEAIKQLQKNMQEAAELLDFELAAQLRDLILELKAM.

It belongs to the UvrB family. Forms a heterotetramer with UvrA during the search for lesions. Interacts with UvrC in an incision complex.

The protein localises to the cytoplasm. In terms of biological role, the UvrABC repair system catalyzes the recognition and processing of DNA lesions. A damage recognition complex composed of 2 UvrA and 2 UvrB subunits scans DNA for abnormalities. Upon binding of the UvrA(2)B(2) complex to a putative damaged site, the DNA wraps around one UvrB monomer. DNA wrap is dependent on ATP binding by UvrB and probably causes local melting of the DNA helix, facilitating insertion of UvrB beta-hairpin between the DNA strands. Then UvrB probes one DNA strand for the presence of a lesion. If a lesion is found the UvrA subunits dissociate and the UvrB-DNA preincision complex is formed. This complex is subsequently bound by UvrC and the second UvrB is released. If no lesion is found, the DNA wraps around the other UvrB subunit that will check the other stand for damage. The chain is UvrABC system protein B from Streptococcus equi subsp. equi (strain 4047).